The sequence spans 1062 residues: Translation initiation factor IF-2 (1062 aa).

The tract at residues S34–N463 is disordered. Over residues P76–A121 the composition is skewed to pro residues. Residues S122–V153 show a composition bias toward low complexity. Over residues P154–G178 the composition is skewed to pro residues. A compositionally biased stretch (gly residues) spans T198 to A214. The span at R294–G305 shows a compositional bias: pro residues. Gly residues-rich tracts occupy residues P307–G324 and P344–G430. Residues R431–K442 are compositionally biased toward basic residues. Residues S555–D727 form the tr-type G domain. Positions G564–T571 are G1. G564–T571 lines the GTP pocket. A G2 region spans residues G589–H593. Residues D614–G617 form a G3 region. GTP-binding positions include D614–H618 and N668–D671. The tract at residues N668–D671 is G4. The tract at residues S704 to R706 is G5.

Belongs to the TRAFAC class translation factor GTPase superfamily. Classic translation factor GTPase family. IF-2 subfamily.

It is found in the cytoplasm. Functionally, one of the essential components for the initiation of protein synthesis. Protects formylmethionyl-tRNA from spontaneous hydrolysis and promotes its binding to the 30S ribosomal subunits. Also involved in the hydrolysis of GTP during the formation of the 70S ribosomal complex. This chain is Translation initiation factor IF-2, found in Frankia casuarinae (strain DSM 45818 / CECT 9043 / HFP020203 / CcI3).